A 419-amino-acid chain; its full sequence is Effector protein BipC (419 aa).

2 disordered regions span residues 62–91 and 338–402; these read VAGSGAQRVELARPKPDAQTRATDRRTVSG and LQSG…AKSQ. 2 stretches are compositionally biased toward basic and acidic residues: residues 71-91 and 380-392; these read ELARPKPDAQTRATDRRTVSG and TRDEAAHRSREAA.

Belongs to the SctB/SipC family.

Its subcellular location is the secreted. In Burkholderia pseudomallei (strain 1106a), this protein is Effector protein BipC (bipC).